The sequence spans 187 residues: Crossover junction endodeoxyribonuclease RuvC (187 aa).

Residues aspartate 7, glutamate 67, and aspartate 140 contribute to the active site. The Mg(2+) site is built by aspartate 7, glutamate 67, and aspartate 140.

The protein belongs to the RuvC family. In terms of assembly, homodimer which binds Holliday junction (HJ) DNA. The HJ becomes 2-fold symmetrical on binding to RuvC with unstacked arms; it has a different conformation from HJ DNA in complex with RuvA. In the full resolvosome a probable DNA-RuvA(4)-RuvB(12)-RuvC(2) complex forms which resolves the HJ. Mg(2+) serves as cofactor.

It localises to the cytoplasm. The enzyme catalyses Endonucleolytic cleavage at a junction such as a reciprocal single-stranded crossover between two homologous DNA duplexes (Holliday junction).. In terms of biological role, the RuvA-RuvB-RuvC complex processes Holliday junction (HJ) DNA during genetic recombination and DNA repair. Endonuclease that resolves HJ intermediates. Cleaves cruciform DNA by making single-stranded nicks across the HJ at symmetrical positions within the homologous arms, yielding a 5'-phosphate and a 3'-hydroxyl group; requires a central core of homology in the junction. The consensus cleavage sequence is 5'-(A/T)TT(C/G)-3'. Cleavage occurs on the 3'-side of the TT dinucleotide at the point of strand exchange. HJ branch migration catalyzed by RuvA-RuvB allows RuvC to scan DNA until it finds its consensus sequence, where it cleaves and resolves the cruciform DNA. The protein is Crossover junction endodeoxyribonuclease RuvC of Chlorobaculum parvum (strain DSM 263 / NCIMB 8327) (Chlorobium vibrioforme subsp. thiosulfatophilum).